The following is a 267-amino-acid chain: Diphthine--ammonia ligase (267 aa).

Y97 carries the phosphotyrosine modification.

Belongs to the Diphthine--ammonia ligase family.

It catalyses the reaction diphthine-[translation elongation factor 2] + NH4(+) + ATP = diphthamide-[translation elongation factor 2] + AMP + diphosphate + H(+). Its pathway is protein modification; peptidyl-diphthamide biosynthesis. Amidase that catalyzes the last step of diphthamide biosynthesis using ammonium and ATP. Diphthamide biosynthesis consists in the conversion of an L-histidine residue in the translation elongation factor 2 (EEF2) to diphthamide. This Mus musculus (Mouse) protein is Diphthine--ammonia ligase (Dph6).